A 455-amino-acid polypeptide reads, in one-letter code: ATP-dependent protease ATPase subunit HslU (455 aa).

ATP is bound by residues Val-23, 65-70, Asp-266, Glu-333, and Arg-405; that span reads GVGKTE.

The protein belongs to the ClpX chaperone family. HslU subfamily. A double ring-shaped homohexamer of HslV is capped on each side by a ring-shaped HslU homohexamer. The assembly of the HslU/HslV complex is dependent on binding of ATP.

The protein localises to the cytoplasm. In terms of biological role, ATPase subunit of a proteasome-like degradation complex; this subunit has chaperone activity. The binding of ATP and its subsequent hydrolysis by HslU are essential for unfolding of protein substrates subsequently hydrolyzed by HslV. HslU recognizes the N-terminal part of its protein substrates and unfolds these before they are guided to HslV for hydrolysis. The polypeptide is ATP-dependent protease ATPase subunit HslU (Xanthomonas euvesicatoria pv. vesicatoria (strain 85-10) (Xanthomonas campestris pv. vesicatoria)).